Reading from the N-terminus, the 604-residue chain is Pescadillo homolog (604 aa).

A BRCT domain is found at 349 to 448; that stretch reads PTSTLFSKFI…ELLPVNKYAP (100 aa). 2 disordered regions span residues 452–562 and 579–604; these read LPPH…MTNK and TRTQ…LSKK. Coiled coils occupy residues 468-522 and 573-604; these read EAEK…LEAA and GIDK…LSKK. The span at 476–510 shows a compositional bias: acidic residues; that stretch reads ENAEEEEEDEVDEDDEDADEDEEDEEEEDEEEDED. The segment covering 593–604 has biased composition (basic and acidic residues); the sequence is KTKAQLDKLSKK.

Belongs to the pescadillo family. In terms of assembly, component of the NOP7 complex, composed of ERB1, NOP7 and YTM1. The complex is held together by ERB1, which interacts with NOP7 via its N-terminal domain and with YTM1 via a high-affinity interaction between the seven-bladed beta-propeller domains of the 2 proteins. The NOP7 complex associates with the 66S pre-ribosome.

The protein localises to the nucleus. Its subcellular location is the nucleolus. It is found in the nucleoplasm. In terms of biological role, component of the NOP7 complex, which is required for maturation of the 25S and 5.8S ribosomal RNAs and formation of the 60S ribosome. The polypeptide is Pescadillo homolog (Scheffersomyces stipitis (strain ATCC 58785 / CBS 6054 / NBRC 10063 / NRRL Y-11545) (Yeast)).